The chain runs to 664 residues: UV-stimulated scaffold protein A homolog (664 aa).

Residues 10 to 153 (KVIGLIEKAT…LKNTLKLKFP (144 aa)) form a VHS-like region. Positions 148–180 (LKLKFPDLQANAARIQRERQEREMKTKEILRNK) form a coiled coil. Disordered stretches follow at residues 330 to 350 (HGNE…DGKV) and 362 to 403 (MRTQ…GNSL). Positions 334-347 (ETNEEEEDIWEEDD) are enriched in acidic residues. A compositionally biased stretch (polar residues) spans 363 to 374 (RTQQSENSSLPS). Positions 377 to 387 (EAKKSTSEARS) are enriched in basic and acidic residues. Polar residues predominate over residues 388-402 (NKVSNTKKVGSSGNS). Residues 473-500 (TPPCRASLKKGGLCQRRDLRVCPFHGPI) form a UVSSA-type zinc finger. The Zn(2+) site is built by Cys-476, Cys-486, Cys-494, and His-497. Disordered stretches follow at residues 514–546 (SPLD…DPNQ) and 640–664 (VKGT…ANQW). Composition is skewed to polar residues over residues 521–533 (NQTS…NQDV) and 640–650 (VKGTNPQQLAQ).

It belongs to the UVSSA family.

It localises to the chromosome. The polypeptide is UV-stimulated scaffold protein A homolog (Arabidopsis thaliana (Mouse-ear cress)).